The sequence spans 312 residues: DDRGK domain-containing protein 1 (312 aa).

The Lumenal portion of the chain corresponds to 1 to 2 (ME). A helical transmembrane segment spans residues 3 to 23 (LIILVGIATALLVVIITLYLL). Residues 24–312 (QKKNAAPETK…ISAGGEEASS (289 aa)) are Cytoplasmic-facing. Positions 59–79 (NQRNRLRQNAPAAPAGQVAPA) are enriched in low complexity. The disordered stretch occupies residues 59–162 (NQRNRLRQNA…RKHQEDLEAE (104 aa)). The segment covering 110–162 (LDEKMGAKKRAKMEAKEQKRLQREQELHDREQRKVKEAKEEAERKHQEDLEAE) has biased composition (basic and acidic residues).

The protein belongs to the DDRGK1 family. In terms of assembly, interacts with Atg9; the interaction is transient.

The protein resides in the endoplasmic reticulum membrane. Its function is as follows. Substrate adapter for ufmylation, the covalent attachment of the ubiquitin-like modifier UFM1 to substrate proteins. Required for ufmylation of Atg9; protects the nervous system during aging, possibly by stabilizing Atg9 and supporting its function. This chain is DDRGK domain-containing protein 1, found in Drosophila yakuba (Fruit fly).